A 258-amino-acid polypeptide reads, in one-letter code: Ribosomal RNA small subunit methyltransferase A (258 aa).

S-adenosyl-L-methionine-binding residues include His-13, Leu-15, Gly-40, Glu-61, Asp-85, and Asn-106.

The protein belongs to the class I-like SAM-binding methyltransferase superfamily. rRNA adenine N(6)-methyltransferase family. RsmA subfamily.

It is found in the cytoplasm. The catalysed reaction is adenosine(1518)/adenosine(1519) in 16S rRNA + 4 S-adenosyl-L-methionine = N(6)-dimethyladenosine(1518)/N(6)-dimethyladenosine(1519) in 16S rRNA + 4 S-adenosyl-L-homocysteine + 4 H(+). In terms of biological role, specifically dimethylates two adjacent adenosines (A1518 and A1519) in the loop of a conserved hairpin near the 3'-end of 16S rRNA in the 30S particle. May play a critical role in biogenesis of 30S subunits. This chain is Ribosomal RNA small subunit methyltransferase A, found in Porphyromonas gingivalis (strain ATCC 33277 / DSM 20709 / CIP 103683 / JCM 12257 / NCTC 11834 / 2561).